A 384-amino-acid polypeptide reads, in one-letter code: Protein NDRG1 (384 aa).

Serine 2 is modified (N-acetylserine). Serine 2, serine 319, and serine 326 each carry phosphoserine. The disordered stretch occupies residues 325–384; that stretch reads RSRTASGSSVTSLEGARSRSHTSEGTRSRSHTSEGTRLDIIPNSGGPGSSAGPNSTEVSC. The span at 327–336 shows a compositional bias: polar residues; it reads RTASGSSVTS. Threonine 328 bears the Phosphothreonine; by SGK1 mark. Phosphoserine; by SGK1 is present on residues serine 330 and serine 332. At serine 333 the chain carries Phosphoserine. Residue threonine 335 is modified to Phosphothreonine. A phosphoserine mark is found at serine 336 and serine 342. 2 tandem repeats follow at residues 339-348 and 349-358. Residues 339–358 form a 2 X 10 AA tandem repeats of G-[PST]-R-S-R-S-H-T-S-E region; it reads GARSRSHTSEGTRSRSHTSE. Positions 345 to 361 are enriched in basic and acidic residues; it reads HTSEGTRSRSHTSEGTR. Position 346 is a phosphothreonine; by SGK1 (threonine 346). Phosphoserine is present on serine 352. Threonine 356 bears the Phosphothreonine; by SGK1 mark. Positions 374–384 are enriched in low complexity; the sequence is SAGPNSTEVSC.

Belongs to the NDRG family. In terms of assembly, interacts with RAB4A (membrane-bound form); the interaction involves NDRG1 in vesicular recycling of CDH1. Interacts with APOA1, APOA2, PRA1 and RTN1. Under stress conditions, phosphorylated in the C-terminal on many serine and threonine residues. Phosphorylated in vitro by PKA. Phosphorylation enhanced by increased intracellular cAMP levels. Homocysteine induces dephosphorylation. Phosphorylation by SGK1 is cell cycle dependent.

Its subcellular location is the cytoplasm. The protein localises to the cytosol. It is found in the cytoskeleton. It localises to the microtubule organizing center. The protein resides in the centrosome. Its subcellular location is the nucleus. The protein localises to the cell membrane. Stress-responsive protein involved in hormone responses, cell growth, and differentiation. Acts as a tumor suppressor in many cell types. Necessary but not sufficient for p53/TP53-mediated caspase activation and apoptosis. Has a role in cell trafficking notably of the Schwann cell and is necessary for the maintenance and development of the peripheral nerve myelin sheath. Required for vesicular recycling of CDH1 and TF. May also function in lipid trafficking. Protects cells from spindle disruption damage. Functions in p53/TP53-dependent mitotic spindle checkpoint. Regulates microtubule dynamics and maintains euploidy. The chain is Protein NDRG1 (NDRG1) from Bos taurus (Bovine).